The following is a 441-amino-acid chain: Serine hydroxymethyltransferase (441 aa).

124 to 126 contacts (6S)-5,6,7,8-tetrahydrofolate; that stretch reads GHI. Residue lysine 239 is modified to N6-(pyridoxal phosphate)lysine.

It belongs to the SHMT family. In terms of assembly, homodimer. Pyridoxal 5'-phosphate serves as cofactor.

Its subcellular location is the cytoplasm. It participates in amino-acid biosynthesis; glycine biosynthesis; glycine from L-serine: step 1/1. In terms of biological role, catalyzes the reversible interconversion of serine and glycine with a modified folate serving as the one-carbon carrier. Also exhibits a pteridine-independent aldolase activity toward beta-hydroxyamino acids, producing glycine and aldehydes, via a retro-aldol mechanism. This Cenarchaeum symbiosum (strain A) protein is Serine hydroxymethyltransferase.